Reading from the N-terminus, the 196-residue chain is MSRYRGPRLKKIRRLGALPGLTRKTPKSGSNLKKKFNSGKKEQYRIRLQEKQKLRFHYGLTERQLLRYVHIAGKAKRSTGQVLLQLLEMRLDNILFRLGMASTIPGARQLVNHRHILVNGRIVNIPSFRCKPRDIITTKDNQRSKGLVQNYIASSDPGKLPKHLTIDTLEYKGLVNKILDRKWVGLKINELLVVEY.

Positions 89–157 (MRLDNILFRL…VQNYIASSDP (69 aa)) constitute an S4 RNA-binding domain.

Belongs to the universal ribosomal protein uS4 family. As to quaternary structure, part of the 30S ribosomal subunit. Contacts protein S5. The interaction surface between S4 and S5 is involved in control of translational fidelity.

It is found in the plastid. The protein resides in the chloroplast. In terms of biological role, one of the primary rRNA binding proteins, it binds directly to 16S rRNA where it nucleates assembly of the body of the 30S subunit. Its function is as follows. With S5 and S12 plays an important role in translational accuracy. The chain is Small ribosomal subunit protein uS4c (rps4) from Elymus canadensis (Canada wild rye).